The primary structure comprises 288 residues: Glucose uptake protein GlcU (288 aa).

A run of 10 helical transmembrane segments spans residues 4-26, 33-51, 56-75, 82-104, 114-136, 148-170, 180-197, 206-225, 230-252, and 264-283; these read LIAL…VGGG, GTTF…TGNA, LTII…GQGY, LIGV…TLFS, GVQV…LTSI, NFGK…VVVA, ALFF…ILSA, TLWN…FMFY, VGVA…GGIF, and IGIW…SEIL.

This sequence belongs to the GRP transporter (TC 2.A.7.5) family.

It is found in the cell membrane. Involved in the uptake of glucose. The protein is Glucose uptake protein GlcU (glcU) of Staphylococcus xylosus.